A 445-amino-acid chain; its full sequence is Nuclear hormone receptor family member nhr-1 (445 aa).

Positions 19–55 (PMVNSQRNEDPSMYMNGSAASVSHTNGSSSMGNDQKF) are disordered. The span at 36 to 51 (SAASVSHTNGSSSMGN) shows a compositional bias: polar residues. Residues 70–145 (GELCAVCSDL…VGMDAKALQI (76 aa)) constitute a DNA-binding region (nuclear receptor). NR C4-type zinc fingers lie at residues 73 to 93 (CAVC…CNGC) and 109 to 133 (CQYN…FNKC). The 266-residue stretch at 179–444 (QDQEIIDQLT…PFVKELCMKR (266 aa)) folds into the NR LBD domain.

This sequence belongs to the nuclear hormone receptor family.

Its subcellular location is the nucleus. In terms of biological role, orphan nuclear receptor which acts in concert with the insulin/IGF-1-like signaling (IIS) pathway during osmotic stress, perhaps in response to a ligand modified by the sulfotransferase ssu-1. The sequence is that of Nuclear hormone receptor family member nhr-1 (nhr-1) from Caenorhabditis elegans.